The primary structure comprises 117 residues: Large ribosomal subunit protein bL19 (117 aa).

The protein belongs to the bacterial ribosomal protein bL19 family.

In terms of biological role, this protein is located at the 30S-50S ribosomal subunit interface and may play a role in the structure and function of the aminoacyl-tRNA binding site. The protein is Large ribosomal subunit protein bL19 of Bacteroides fragilis (strain ATCC 25285 / DSM 2151 / CCUG 4856 / JCM 11019 / LMG 10263 / NCTC 9343 / Onslow / VPI 2553 / EN-2).